Here is a 96-residue protein sequence, read N- to C-terminus: Co-chaperonin GroES (96 aa).

Belongs to the GroES chaperonin family. As to quaternary structure, heptamer of 7 subunits arranged in a ring. Interacts with the chaperonin GroEL.

It is found in the cytoplasm. Its function is as follows. Together with the chaperonin GroEL, plays an essential role in assisting protein folding. The GroEL-GroES system forms a nano-cage that allows encapsulation of the non-native substrate proteins and provides a physical environment optimized to promote and accelerate protein folding. GroES binds to the apical surface of the GroEL ring, thereby capping the opening of the GroEL channel. The polypeptide is Co-chaperonin GroES (Methylobacterium radiotolerans (strain ATCC 27329 / DSM 1819 / JCM 2831 / NBRC 15690 / NCIMB 10815 / 0-1)).